Reading from the N-terminus, the 358-residue chain is MSADAAAGAPLPRLCCLEKGPNGYGFHLHGEKGKVGQYIRLVEPGSPAEKAGLLAGDRLVEVNGENVEKETHQQVVSRIRAALNAVRLLVVDPDTDEQFRKLGVQIRGELLRAQAGPEQAGPPAAPGEQGPAGENEPREVEKSHPERRELRPRLCAMKKGPNGYGFNLHSDKSRPGQFIRAVDPDSPAEASGLREQDRIVEVNGVCVEGKQHGDVVTAIKAGGDEAKLLVVDKETDEFFKKCKVVPSSEHLNGPLPEPFTNGEIQKNNPETLAPAASESPRPALARSASSDTSEELASQDSPKKEDSTAPSSTSSSSDPILDFSISLAVAKERAHQKRSSRRAPQMDWSEKKELFSNL.

S2 bears the N-acetylserine mark. Phosphoserine occurs at positions 2 and 46. The PDZ 1 domain occupies 14–94 (LCCLEKGPNG…AVRLLVVDPD (81 aa)). Residues 114–134 (QAGPEQAGPPAAPGEQGPAGE) are compositionally biased toward low complexity. The tract at residues 114 to 151 (QAGPEQAGPPAAPGEQGPAGENEPREVEKSHPERRELR) is disordered. Positions 135–151 (NEPREVEKSHPERRELR) are enriched in basic and acidic residues. In terms of domain architecture, PDZ 2 spans 154–234 (LCAMKKGPNG…EAKLLVVDKE (81 aa)). The disordered stretch occupies residues 247-358 (SSEHLNGPLP…SEKKELFSNL (112 aa)). Over residues 272–290 (LAPAASESPRPALARSASS) the composition is skewed to low complexity. 3 positions are modified to phosphoserine: S279, S289, and S290. T292 bears the Phosphothreonine mark. S293, S298, and S301 each carry phosphoserine. Residues 308–327 (TAPSSTSSSSDPILDFSISL) are compositionally biased toward low complexity. A compositionally biased stretch (basic and acidic residues) spans 348 to 358 (WSEKKELFSNL).

Homodimer, and heterodimer with NHERF2. Binds the N-termini of EZR, RDX and MSN. Binds the C-termini of PDGFRA, PDGFRB, ADRB2, NOS2 and CFTR. Binds ARHGAP17, EPI64, RACK1, OPRK1, GNAQ, CTNNB1 and PLCB3. Binds PDZK1. Interacts with CLCN3. Binds the C-terminus of PAG1. In resting T-cells, part of a PAG1-NHERF1-MSN complex which is disrupted upon TCR activation. Forms a complex with CFTR and SLC4A7. Forms a complex with SLC4A7 and ATP6V1B1. Interacts with TRPC4 (via the PDZ-binding domain). Directly interacts with HTR4. Interacts (via the PDZ 1 domain) with PODXL (via the C-terminal PDZ-binding motif DTHL); interaction is not detected in glomerular epithelium cells. Interacts (via the PDZ 1 domain) with PODXL (via the C-terminal PDZ-binding motif DTHL); the interaction take place early in the secretory pathway and is necessary for its apical membrane sorting. Interacts with SLC26A3. Interacts with MCC. Interacts with SLC34A1. Interacts (via the PDZ domains) with SLC26A6 isoform 4 and isoform 5. Interacts (via PDZ domains) with ACE2 (via PDZ-binding motif); the interaction may enhance ACE2 membrane residence. Post-translationally, phosphorylated on serine residues. As to expression, detected in ileum, duodenum and in kidney, where it is found in the glomerulus, the proximal tubule, the thick ascending limb of Henle's loop and the cortical collecting duct.

Its subcellular location is the cytoplasm. The protein localises to the apical cell membrane. It is found in the cell projection. The protein resides in the filopodium. It localises to the ruffle. Its subcellular location is the microvillus. The protein localises to the endomembrane system. Its function is as follows. Scaffold protein that connects plasma membrane proteins with members of the ezrin/moesin/radixin family and thereby helps to link them to the actin cytoskeleton and to regulate their surface expression. Necessary for recycling of internalized ADRB2. Was first known to play a role in the regulation of the activity and subcellular location of SLC9A3. Necessary for cAMP-mediated phosphorylation and inhibition of SLC9A3. Involved in sperm capacitation. May participate in the regulation of the chloride and bicarbonate homeostasis in spermatozoa. May enhance Wnt signaling. May participate in HTR4 targeting to microvilli. Involved in the regulation of phosphate reabsorption in the renal proximal tubules. The sequence is that of Na(+)/H(+) exchange regulatory cofactor NHE-RF1 (NHERF1) from Oryctolagus cuniculus (Rabbit).